We begin with the raw amino-acid sequence, 329 residues long: 1-phosphatidylinositol phosphodiesterase (329 aa).

Residues 1–31 (MSNKKLILKLFICSTIFITFVFALHDKRVVA) form the signal peptide. One can recognise a PI-PLC X-box domain in the interval 51–194 (NIPLARISIP…ARGKIVLLKR (144 aa)). The Proton acceptor role is filled by His-63. The active-site Proton donor is the His-113.

Its subcellular location is the secreted. It carries out the reaction a 1,2-diacyl-sn-glycero-3-phospho-(1D-myo-inositol) = 1D-myo-inositol 1,2-cyclic phosphate + a 1,2-diacyl-sn-glycerol. Functionally, cleaves glycosylphosphatidylinositol (GPI) and phosphatidylinositol (PI) anchors but not PI phosphates. This is 1-phosphatidylinositol phosphodiesterase from Bacillus thuringiensis.